We begin with the raw amino-acid sequence, 234 residues long: Enterobactin synthase component D (234 aa).

Residues D107, E109, and E152 each contribute to the Mg(2+) site.

Belongs to the P-Pant transferase superfamily. EntD family. EntB, EntD, EntE, and EntF form a multienzyme complex called enterobactin synthase. Requires Mg(2+) as cofactor.

It localises to the membrane. It catalyses the reaction apo-[aryl-carrier protein] + CoA = holo-[aryl-carrier protein] + adenosine 3',5'-bisphosphate + H(+). The enzyme catalyses apo-[peptidyl-carrier protein] + CoA = holo-[peptidyl-carrier protein] + adenosine 3',5'-bisphosphate + H(+). It functions in the pathway siderophore biosynthesis; enterobactin biosynthesis. Its function is as follows. Involved in the biosynthesis of the siderophore enterobactin (enterochelin), which is a macrocyclic trimeric lactone of N-(2,3-dihydroxybenzoyl)-serine. The serine trilactone serves as a scaffolding for the three catechol functionalities that provide hexadentate coordination for the tightly ligated iron(2+) atoms. Plays an essential role in the assembly of the enterobactin by catalyzing the transfer of the 4'-phosphopantetheine (Ppant) moiety from coenzyme A to the apo-domains of both EntB (ArCP domain) and EntF (PCP domain) to yield their holo-forms which make them competent for the activation of 2,3-dihydroxybenzoate (DHB) and L-serine, respectively. The protein is Enterobactin synthase component D of Salmonella typhi.